The chain runs to 146 residues: Hemoglobin subunit beta (146 aa).

Valine 1 is modified (N-acetylvaline). The Globin domain maps to 2 to 146 (HLTPEEKNAV…VANALAHKYH (145 aa)). Phosphothreonine is present on threonine 12. Serine 44 is subject to Phosphoserine. At lysine 59 the chain carries N6-acetyllysine. Histidine 63 serves as a coordination point for heme b. Lysine 82 carries the N6-acetyllysine modification. Histidine 92 contacts heme b. Cysteine 93 carries the post-translational modification S-nitrosocysteine. Position 144 is an N6-acetyllysine (lysine 144).

It belongs to the globin family. As to quaternary structure, heterotetramer of two alpha chains and two beta chains. Red blood cells.

In terms of biological role, involved in oxygen transport from the lung to the various peripheral tissues. The chain is Hemoglobin subunit beta (HBB) from Papio cynocephalus (Yellow baboon).